The sequence spans 190 residues: Venom nerve growth factor (190 aa).

The first 7 residues, 1–7, serve as a signal peptide directing secretion; it reads FLIGIWA. A propeptide spanning residues 8–111 is cleaved from the precursor; that stretch reads APKSEDNVPL…SLNRNIRAKR (104 aa). A disulfide bridge links C125 with C190. An N-linked (GlcNAc...) asparagine glycan is attached at N134.

The protein belongs to the NGF-beta family. As to quaternary structure, homodimer; non-covalently linked. Post-translationally, glycosylated. Expressed by the venom gland.

Its subcellular location is the secreted. Its function is as follows. Nerve growth factor is important for the development and maintenance of the sympathetic and sensory nervous systems. It stimulates division and differentiation of sympathetic and embryonic sensory neurons as well as basal forebrain cholinergic neurons in the brain. Its relevance in the snake venom is not clear. However, it has been shown to inhibit metalloproteinase-dependent proteolysis of platelet glycoprotein Ib alpha, suggesting a metalloproteinase inhibition to prevent metalloprotease autodigestion and/or protection against prey proteases. Binds a lipid between the two protein chains in the homodimer. The lipid-bound form promotes histamine relase from mouse mast cells, contrary to the lipid-free form. This chain is Venom nerve growth factor, found in Agkistrodon contortrix contortrix (Southern copperhead).